The primary structure comprises 510 residues: Cytochrome P450 11B2, mitochondrial (510 aa).

The N-terminal 34 residues, 1–34 (MGACDNDFIELHSRVTADVWLARPWQCLHRTRAL), are a transit peptide targeting the mitochondrion. Phenylalanine 391 provides a ligand contact to 21-hydroxyprogesterone. Position 457 (cysteine 457) interacts with heme.

Belongs to the cytochrome P450 family. The cofactor is heme. As to expression, adrenal cortex.

The protein localises to the mitochondrion inner membrane. The enzyme catalyses a steroid + 2 reduced [adrenodoxin] + O2 + 2 H(+) = an 11beta-hydroxysteroid + 2 oxidized [adrenodoxin] + H2O. The catalysed reaction is 21-hydroxyprogesterone + 2 reduced [adrenodoxin] + O2 + 2 H(+) = corticosterone + 2 oxidized [adrenodoxin] + H2O. It catalyses the reaction corticosterone + 2 reduced [adrenodoxin] + O2 + 2 H(+) = 18-hydroxycorticosterone + 2 oxidized [adrenodoxin] + H2O. It carries out the reaction 18-hydroxycorticosterone + 2 reduced [adrenodoxin] + O2 + 2 H(+) = aldosterone + 2 oxidized [adrenodoxin] + 2 H2O. The enzyme catalyses 11-deoxycortisol + 2 reduced [adrenodoxin] + O2 + 2 H(+) = cortisol + 2 oxidized [adrenodoxin] + H2O. The catalysed reaction is cortisol + 2 reduced [adrenodoxin] + O2 + 2 H(+) = 18-hydroxycortisol + 2 oxidized [adrenodoxin] + H2O. It catalyses the reaction 21-hydroxyprogesterone + 2 reduced [adrenodoxin] + O2 + 2 H(+) = 18-hydroxy-11-deoxycorticosterone + 2 oxidized [adrenodoxin] + H2O. It carries out the reaction 18-hydroxycortisol + 2 reduced [adrenodoxin] + O2 + 2 H(+) = 18-oxocortisol + 2 oxidized [adrenodoxin] + 2 H2O. The protein operates within steroid biosynthesis. Its function is as follows. A cytochrome P450 monooxygenase that catalyzes the biosynthesis of aldosterone, the main mineralocorticoid responsible for salt and water homeostasis. Catalyzes three sequential oxidative reactions of 11-deoxycorticosterone (21-hydroxyprogesterone), namely 11-beta hydroxylation, followed by two successive oxidations at C18 yielding 18-hydroxy and then 18-oxo intermediates (that do not leave the enzyme active site during the consecutive hydroxylation reactions), and end with the formation of aldosterone. Can also produce 18-hydroxycortisol and 18-oxocortisol, derived from successive oxidations of cortisol at C18, normally found at very low levels, but significantly increased in primary aldosteronism, the most common form of secondary hypertension. Mechanistically, uses molecular oxygen inserting one oxygen atom into a substrate and reducing the second into a water molecule. Two electrons are provided by NADPH via a two-protein mitochondrial transfer system comprising flavoprotein FDXR (adrenodoxin/ferredoxin reductase) and nonheme iron-sulfur protein FDX1 or FDX2 (adrenodoxin/ferredoxin). Could also be involved in the androgen metabolic pathway. This is Cytochrome P450 11B2, mitochondrial (Cyp11b2) from Rattus norvegicus (Rat).